The chain runs to 428 residues: Putative zinc metalloprotease SA1105 (428 aa).

His-21 is a Zn(2+) binding site. Glu-22 is an active-site residue. Residue His-25 participates in Zn(2+) binding. 4 consecutive transmembrane segments (helical) span residues 172–194 (FLTL…IGLA), 309–331 (GSTL…GFSF), 352–374 (IISL…LIPI), and 401–420 (TTII…LVTW). Positions 186-269 (ALVLFIGLAY…TKSVELTPKK (84 aa)) constitute a PDZ domain.

The protein belongs to the peptidase M50B family. The cofactor is Zn(2+).

Its subcellular location is the cell membrane. This chain is Putative zinc metalloprotease SA1105, found in Staphylococcus aureus (strain N315).